Consider the following 832-residue polypeptide: MEFIDYQAFETAPDNNDKSGTNGEVSLPEPVSRLNISSFSLDYKPLKDNFKLPSILSNVETSLLQTKADVQDDTAMAQKLKKDTSNLYDRMSDYVDLSIQNFGTKNIKDSTPIPEATTRKTLVEPSSIDLEKSNEILAKKLSKVLNEYDTSYHHTIKLRKSLKILEKNRDKLGISEEKLISPDYIGTLARKSLRTDLETQLLKDHVTVLEDFKPIVRRIKRLAAPVQQIENIGEEILKNDKETFSQKYISDIDDCRNHLLKLEIKKKILKALQSKFTLNQLEDDLIENGPLKEEIFDIVDKLTKMKEHATYLLALPNSKAGEVLIKQTNITLDTINKKISNYLIDYMYTFESNSNMGTKHVIDPTERNLALFQKGLVYLSNDIQYYDDFLKRVTTMRSKTLLDEFLSQFGTTSELSTTISSSEDPVRYIGDVLATIHTMIANEVDFVKSLFKFTSEDMDKSSSMIINNNAQYFDGLDLKLVNDIVQYLANSCKLRIEQVIRFEENKVINFEITQLLDLYSSMFVNKGIRDDNPLVLHLIQLRDISEKKIINSLTKQLAETENTQISSPDLLPPQWLSDYLNSITELFDHVERLYGGKRFSKDDIDSDKYMFPYDTLKTVIEEPFMTSLIKQIKDSYPLAKKKEEIRIVMLTLQINCFEMINFRLQPYSLSIFSYDESCKHILENIQHTLDETVEKLQKLQISLLFERTGLNMYYNLMNMIFPIDSIQDEIDYDMYMSLVDNPLMSLENLEKNIHEKLNDYLPQALPDFQDNLLIKLTSPSIADDVCEICFRTLTDFYCIFRRILKHLYPDNKEKVEAILNFTESEFKTLAGV.

It belongs to the COG6 family.

The protein localises to the golgi apparatus membrane. Acts as a component of the peripheral membrane COG complex that is involved in intra-Golgi protein trafficking. COG is located at the cis-Golgi, and regulates tethering of retrograde intra-Golgi vesicles and possibly a number of other membrane trafficking events. In Candida glabrata (strain ATCC 2001 / BCRC 20586 / JCM 3761 / NBRC 0622 / NRRL Y-65 / CBS 138) (Yeast), this protein is Conserved oligomeric Golgi complex subunit 6 (COG6).